A 280-amino-acid chain; its full sequence is Ribosomal protein L11 methyltransferase (280 aa).

S-adenosyl-L-methionine-binding residues include Thr-131, Gly-152, Asp-174, and Asn-217.

The protein belongs to the methyltransferase superfamily. PrmA family.

The protein resides in the cytoplasm. It carries out the reaction L-lysyl-[protein] + 3 S-adenosyl-L-methionine = N(6),N(6),N(6)-trimethyl-L-lysyl-[protein] + 3 S-adenosyl-L-homocysteine + 3 H(+). In terms of biological role, methylates ribosomal protein L11. This Bacteroides thetaiotaomicron (strain ATCC 29148 / DSM 2079 / JCM 5827 / CCUG 10774 / NCTC 10582 / VPI-5482 / E50) protein is Ribosomal protein L11 methyltransferase.